We begin with the raw amino-acid sequence, 161 residues long: MHHQHGLFMLALLAFLLVMTVLGTDTGKKDKQEKKVKKSDCGDWQWSVCVPTSGDCGLGTREGTRSGKECKQTIKTQKCKIPCNWKKQFGAECKYQFQEWGDCDPETGLKTRNGNLKRALHNAECQKTVTLSKPCGKVTKPKLQESKKKKKEGKNKEKLLD.

Residues 1-23 (MHHQHGLFMLALLAFLLVMTVLG) form the signal peptide. 5 disulfide bridges follow: C41-C70, C49-C79, C56-C83, C93-C125, and C103-C135. 2 chondroitin sulfate binding regions span residues 86 to 93 (KKQFGAEC) and 117 to 125 (KRALHNAEC). Residues 136–161 (GKVTKPKLQESKKKKKEGKNKEKLLD) are disordered. Residues 141–161 (PKLQESKKKKKEGKNKEKLLD) form a chondroitin sulfate A binding region.

The protein belongs to the pleiotrophin family. As to expression, expressed in high levels in brain and eye. Lower levels in bone. In the tailbud embryo stage, it is expressed exclusively in the central nervous system, especially in the hind region of the brain.

It localises to the secreted. Its function is as follows. Secreted growth factor that mediates its signal through cell-surface proteoglycan and non-proteoglycan receptors. Binds cell-surface proteoglycan receptor via their chondroitin sulfate (CS) groups. Thereby regulates many processes like cell proliferation, cell survival, cell growth, cell differentiation and cell migration. Has antibacterial activity against both Gram-positive and Gram-negative bacteria. The protein is Pleiotrophin-B (ptn-b) of Xenopus laevis (African clawed frog).